The primary structure comprises 639 residues: Collagen alpha-1(XII) chain (639 aa).

A VWFA domain is found at Cys-1 to Leu-114. 6 Fibronectin type-III domains span residues Ala-130–Pro-219, Ile-220–Pro-310, Arg-311–Pro-401, Thr-402–Ser-490, Gly-491–Asn-585, and Leu-586–Leu-639. The interval Asp-473–Gln-496 is disordered.

It belongs to the fibril-associated collagens with interrupted helices (FACIT) family. In terms of assembly, trimer of identical chains each containing 190 kDa of non-triple-helical sequences. Post-translationally, the triple-helical tail is stabilized by disulfide bonds at each end. In terms of processing, prolines at the third position of the tripeptide repeating unit (G-X-Y) are hydroxylated in some or all of the chains. O-glycosylated; glycosaminoglycan of chondroitin-sulfate type.

It localises to the secreted. The protein localises to the extracellular space. Its subcellular location is the extracellular matrix. In terms of biological role, type XII collagen interacts with type I collagen-containing fibrils, the COL1 domain could be associated with the surface of the fibrils, and the COL2 and NC3 domains may be localized in the perifibrillar matrix. The sequence is that of Collagen alpha-1(XII) chain (COL12A1) from Oryctolagus cuniculus (Rabbit).